Consider the following 433-residue polypeptide: Trigger factor (433 aa).

One can recognise a PPIase FKBP-type domain in the interval 161 to 246; that stretch reads GDRVTMDFVG…AKKVEARDLP (86 aa).

Belongs to the FKBP-type PPIase family. Tig subfamily.

It localises to the cytoplasm. It catalyses the reaction [protein]-peptidylproline (omega=180) = [protein]-peptidylproline (omega=0). Functionally, involved in protein export. Acts as a chaperone by maintaining the newly synthesized protein in an open conformation. Functions as a peptidyl-prolyl cis-trans isomerase. The sequence is that of Trigger factor from Idiomarina loihiensis (strain ATCC BAA-735 / DSM 15497 / L2-TR).